We begin with the raw amino-acid sequence, 319 residues long: 1-aminocyclopropane-1-carboxylate oxidase (319 aa).

The 102-residue stretch at 152–253 (GPNFGSKVSN…RMSLASFYNP (102 aa)) folds into the Fe2OG dioxygenase domain. The Fe cation site is built by His177, Asp179, and His234.

Belongs to the iron/ascorbate-dependent oxidoreductase family. Fe cation serves as cofactor.

The enzyme catalyses 1-aminocyclopropane-1-carboxylate + L-ascorbate + O2 = ethene + L-dehydroascorbate + hydrogen cyanide + CO2 + 2 H2O. It participates in alkene biosynthesis; ethylene biosynthesis via S-adenosyl-L-methionine; ethylene from S-adenosyl-L-methionine: step 2/2. In Nicotiana tabacum (Common tobacco), this protein is 1-aminocyclopropane-1-carboxylate oxidase (ACO).